Reading from the N-terminus, the 109-residue chain is Ubiquitin-related modifier 1 homolog (109 aa).

Position 109 is a 1-thioglycine (Gly109). Residue Gly109 forms a Glycyl lysine isopeptide (Gly-Lys) (interchain with K-? in acceptor proteins) linkage.

The protein belongs to the URM1 family. In terms of processing, C-terminal thiocarboxylation occurs in 2 steps, it is first acyl-adenylated (-COAMP) via the hesA/moeB/thiF part of the MOCS3 homolog, then thiocarboxylated (-COSH) via the rhodanese domain of the MOCS3 homolog.

It localises to the cytoplasm. It participates in tRNA modification; 5-methoxycarbonylmethyl-2-thiouridine-tRNA biosynthesis. In terms of biological role, acts as a sulfur carrier required for 2-thiolation of mcm(5)S(2)U at tRNA wobble positions of cytosolic tRNA(Lys), tRNA(Glu) and tRNA(Gln). Serves as sulfur donor in tRNA 2-thiolation reaction by being thiocarboxylated (-COSH) at its C-terminus by MOCS3. The sulfur is then transferred to tRNA to form 2-thiolation of mcm(5)S(2)U. Also acts as a ubiquitin-like protein (UBL) that is covalently conjugated via an isopeptide bond to lysine residues of target proteins. The thiocarboxylated form serves as substrate for conjugation and oxidative stress specifically induces the formation of UBL-protein conjugates. In Bombyx mori (Silk moth), this protein is Ubiquitin-related modifier 1 homolog.